The primary structure comprises 379 residues: UDP-4-amino-4-deoxy-L-arabinose--oxoglutarate aminotransferase (379 aa).

N6-(pyridoxal phosphate)lysine is present on Lys-182.

Belongs to the DegT/DnrJ/EryC1 family. ArnB subfamily. As to quaternary structure, homodimer. Requires pyridoxal 5'-phosphate as cofactor.

It carries out the reaction UDP-4-amino-4-deoxy-beta-L-arabinose + 2-oxoglutarate = UDP-beta-L-threo-pentopyranos-4-ulose + L-glutamate. Its pathway is nucleotide-sugar biosynthesis; UDP-4-deoxy-4-formamido-beta-L-arabinose biosynthesis; UDP-4-deoxy-4-formamido-beta-L-arabinose from UDP-alpha-D-glucuronate: step 2/3. It participates in bacterial outer membrane biogenesis; lipopolysaccharide biosynthesis. Its function is as follows. Catalyzes the conversion of UDP-4-keto-arabinose (UDP-Ara4O) to UDP-4-amino-4-deoxy-L-arabinose (UDP-L-Ara4N). The modified arabinose is attached to lipid A and is required for resistance to polymyxin and cationic antimicrobial peptides. The chain is UDP-4-amino-4-deoxy-L-arabinose--oxoglutarate aminotransferase from Escherichia fergusonii (strain ATCC 35469 / DSM 13698 / CCUG 18766 / IAM 14443 / JCM 21226 / LMG 7866 / NBRC 102419 / NCTC 12128 / CDC 0568-73).